The following is a 391-amino-acid chain: Ferrochelatase (391 aa).

The Fe cation site is built by His-196 and Glu-281.

The protein belongs to the ferrochelatase family.

Its subcellular location is the cytoplasm. The enzyme catalyses heme b + 2 H(+) = protoporphyrin IX + Fe(2+). It functions in the pathway porphyrin-containing compound metabolism; protoheme biosynthesis; protoheme from protoporphyrin-IX: step 1/1. In terms of biological role, catalyzes the ferrous insertion into protoporphyrin IX. The protein is Ferrochelatase of Prochlorococcus marinus (strain NATL2A).